Reading from the N-terminus, the 150-residue chain is uncharacterized protein (150 aa).

One can recognise a Flavodoxin-like domain in the interval 4–148; sequence LILYKSIHHK…KAKEFAKSIL (145 aa).

This is an uncharacterized protein from Methanocaldococcus jannaschii (strain ATCC 43067 / DSM 2661 / JAL-1 / JCM 10045 / NBRC 100440) (Methanococcus jannaschii).